Reading from the N-terminus, the 272-residue chain is Undecaprenyl-diphosphatase (272 aa).

Transmembrane regions (helical) follow at residues 5-25 (YSLFVAFVLGVVEGLTEFLPV), 45-65 (AKTFEVIIQLGSILAVVVVFW), 88-108 (HLTLGHILLAMIPAVGLGLAF), 115-135 (LFNPQSVMYALVAGGLLLLAA), 152-171 (TYRQAFAIGCFQCLALWPGF), 189-209 (YAASEFSFILAVPMMLGASGL), 221-241 (GDLPMFAVGFITAFVVALIAI), and 251-271 (ISFVPFAIYRFIVAAAVYWVF).

The protein belongs to the UppP family.

The protein localises to the cell inner membrane. It catalyses the reaction di-trans,octa-cis-undecaprenyl diphosphate + H2O = di-trans,octa-cis-undecaprenyl phosphate + phosphate + H(+). Functionally, catalyzes the dephosphorylation of undecaprenyl diphosphate (UPP). Confers resistance to bacitracin. This Yersinia enterocolitica serotype O:8 / biotype 1B (strain NCTC 13174 / 8081) protein is Undecaprenyl-diphosphatase.